A 204-amino-acid chain; its full sequence is Glycerol-3-phosphate acyltransferase (204 aa).

5 helical membrane passes run 6-26 (YIII…YIVA), 80-100 (LVGI…VAGH), 122-142 (LAVN…VVAI), 144-164 (KYVS…MIMV), and 168-188 (AGLI…RANI).

Belongs to the PlsY family. As to quaternary structure, probably interacts with PlsX.

Its subcellular location is the cell membrane. It carries out the reaction an acyl phosphate + sn-glycerol 3-phosphate = a 1-acyl-sn-glycero-3-phosphate + phosphate. It participates in lipid metabolism; phospholipid metabolism. Its function is as follows. Catalyzes the transfer of an acyl group from acyl-phosphate (acyl-PO(4)) to glycerol-3-phosphate (G3P) to form lysophosphatidic acid (LPA). This enzyme utilizes acyl-phosphate as fatty acyl donor, but not acyl-CoA or acyl-ACP. This is Glycerol-3-phosphate acyltransferase from Clostridioides difficile (strain 630) (Peptoclostridium difficile).